The following is a 524-amino-acid chain: Putative ATP-dependent RNA helicase R458 (524 aa).

The Helicase ATP-binding domain occupies 125-338; sequence VPELIQRKDT…NSYFRKYSPI (214 aa). 138–145 is a binding site for ATP; the sequence is FKSGTGKT. The DEFD box motif lies at 268-271; that stretch reads DEFD. The Helicase C-terminal domain occupies 373–524; sequence IILDLLKQCR…QLPGDLSTLL (152 aa).

This sequence belongs to the DEAD box helicase family. eIF4A subfamily.

The catalysed reaction is ATP + H2O = ADP + phosphate + H(+). Its function is as follows. Putative ATP-dependent RNA helicase. This chain is Putative ATP-dependent RNA helicase R458, found in Acanthamoeba polyphaga mimivirus (APMV).